We begin with the raw amino-acid sequence, 179 residues long: MSLKHRYRETIRPKLLKDLGLSNIHQVPKVVKVNVNRGLGEAAQNSKTLEASLSEMATITGQKALVTRAKKAIAGFKIREGMPIGCTVTLRGERMYAFLERLINLALPRIRDFRGVSPKSFDGRGNYTLGVKEQLIFPEISFDKIDTIRGMDITIVTSARSDEEGRALLKALGFPFRST.

Belongs to the universal ribosomal protein uL5 family. As to quaternary structure, part of the 50S ribosomal subunit; part of the 5S rRNA/L5/L18/L25 subcomplex. Contacts the 5S rRNA and the P site tRNA. Forms a bridge to the 30S subunit in the 70S ribosome.

This is one of the proteins that bind and probably mediate the attachment of the 5S RNA into the large ribosomal subunit, where it forms part of the central protuberance. In the 70S ribosome it contacts protein S13 of the 30S subunit (bridge B1b), connecting the 2 subunits; this bridge is implicated in subunit movement. Contacts the P site tRNA; the 5S rRNA and some of its associated proteins might help stabilize positioning of ribosome-bound tRNAs. This chain is Large ribosomal subunit protein uL5, found in Prochlorococcus marinus (strain MIT 9211).